The primary structure comprises 378 residues: Putative odorant receptor 71a (378 aa).

Over 1–37 (MDYDRIRPVRFLTGVLKWWRLWPRKESVSTPDWTNWQ) the chain is Cytoplasmic. A helical transmembrane segment spans residues 38-58 (AYALHVPFTFLFVLLLWLEAI). Topologically, residues 59–66 (KSRDIQHT) are extracellular. Residues 67-87 (ADVLLICLTTTALGGKVINIW) form a helical membrane-spanning segment. The Cytoplasmic portion of the chain corresponds to 88–127 (KYAHVAQGILSEWSTWDLFELRSKQEVDMWRFEHRRFNRV). A helical transmembrane segment spans residues 128 to 148 (FMFYCLCSAGVIPFIVIQPLF). Residues 149–166 (DIPNRLPFWMWTPFDWQQ) lie on the Extracellular side of the membrane. Residues 167-187 (PVLFWYAFIYQATTIPIACAC) form a helical membrane-spanning segment. At 188 to 255 (NVTMDAVNWY…IFISKSTFTQ (68 aa)) the chain is on the cytoplasmic side. The chain crosses the membrane as a helical span at residues 256-276 (ILVSSLIICFTIYSMQMSPVL). Residues 277–280 (QDLP) are Extracellular-facing. The chain crosses the membrane as a helical span at residues 281 to 301 (GFAAMMQYLVAMIMQVMLPTI). At 302–343 (YGNAVIDSANMLTDSMYNSDWPDMNCRMRRLVLMFMVYLNRP) the chain is on the cytoplasmic side. Residues 344 to 364 (VTLKAGGFFHIGLPLFTKTMN) form a helical membrane-spanning segment. The Extracellular segment spans residues 365-378 (QAYSLLALLLNMNQ).

Belongs to the insect chemoreceptor superfamily. Heteromeric odorant receptor channel (TC 1.A.69) family. Or2a subfamily. In terms of assembly, interacts with Orco. Complexes exist early in the endomembrane system in olfactory sensory neurons (OSNs), coupling these complexes to the conserved ciliary trafficking pathway. In terms of tissue distribution, expressed in olfactory sensory neurons in the maxillary palp.

It is found in the cell membrane. Odorant receptor which mediates acceptance or avoidance behavior, depending on its substrates. The odorant receptor repertoire encodes a large collection of odor stimuli that vary widely in identity, intensity, and duration. May form a complex with Orco to form odorant-sensing units, providing sensitive and prolonged odorant signaling and calcium permeability. The protein is Putative odorant receptor 71a (Or71a) of Drosophila melanogaster (Fruit fly).